Reading from the N-terminus, the 100-residue chain is Large ribosomal subunit protein bL28 (100 aa).

A disordered region spans residues 1-21 (MSRVCDITGQGKSFGNKVSHS). Over residues 10-19 (QGKSFGNKVS) the composition is skewed to polar residues.

This sequence belongs to the bacterial ribosomal protein bL28 family.

The sequence is that of Large ribosomal subunit protein bL28 from Ehrlichia canis (strain Jake).